The chain runs to 148 residues: Hydrogenase expression/formation protein HoxO (148 aa).

The interval 128–148 (IPVLSPESGTPSCSPMETSES) is disordered. A compositionally biased stretch (polar residues) spans 134 to 148 (ESGTPSCSPMETSES).

This sequence belongs to the HupG/HyaE family.

The polypeptide is Hydrogenase expression/formation protein HoxO (hoxO) (Azotobacter vinelandii).